The following is a 460-amino-acid chain: Acetyl-CoA decarbonylase/synthase complex subunit beta (460 aa).

Residues cysteine 188, cysteine 191, cysteine 277, and cysteine 279 each coordinate [Ni-Fe-S] cluster. Residues 402-416 show a composition bias toward acidic residues; it reads EETEPEEEEVEEAYP. A disordered region spans residues 402 to 422; it reads EETEPEEEEVEEAYPEETPIP.

This sequence belongs to the CdhC family. In terms of assembly, monomer. The ACDS complex is made up of alpha, epsilon, beta, gamma and delta chains with a probable stoichiometry of (alpha(2)epsilon(2))(4)-beta(8)-(gamma(1)delta(1))(8). It depends on [Ni-Fe-S] cluster as a cofactor.

It carries out the reaction Co(I)-[corrinoid Fe-S protein] + acetyl-CoA + H(+) = methyl-Co(III)-[corrinoid Fe-S protein] + CO + CoA. Its function is as follows. Part of a complex that catalyzes the reversible cleavage of acetyl-CoA, allowing autotrophic growth from CO(2). The alpha-epsilon complex generates CO from CO(2), while the beta subunit (this protein) combines the CO with CoA and a methyl group to form acetyl-CoA. The methyl group, which is incorporated into acetyl-CoA, is transferred to the beta subunit by a corrinoid iron-sulfur protein (the gamma-delta complex). This chain is Acetyl-CoA decarbonylase/synthase complex subunit beta, found in Methanothermobacter thermautotrophicus (strain ATCC 29096 / DSM 1053 / JCM 10044 / NBRC 100330 / Delta H) (Methanobacterium thermoautotrophicum).